The sequence spans 338 residues: Lipoate-protein ligase A (338 aa).

Residues 29–216 (PATQRVLFLW…AFFAHYGERV (188 aa)) enclose the BPL/LPL catalytic domain. Residues Arg-71, 76-79 (GAVF), and Lys-134 each bind ATP. Lys-134 is a binding site for (R)-lipoate.

This sequence belongs to the LplA family. In terms of assembly, monomer.

It is found in the cytoplasm. The enzyme catalyses L-lysyl-[lipoyl-carrier protein] + (R)-lipoate + ATP = N(6)-[(R)-lipoyl]-L-lysyl-[lipoyl-carrier protein] + AMP + diphosphate + H(+). It participates in protein modification; protein lipoylation via exogenous pathway; protein N(6)-(lipoyl)lysine from lipoate: step 1/2. Its pathway is protein modification; protein lipoylation via exogenous pathway; protein N(6)-(lipoyl)lysine from lipoate: step 2/2. Functionally, catalyzes both the ATP-dependent activation of exogenously supplied lipoate to lipoyl-AMP and the transfer of the activated lipoyl onto the lipoyl domains of lipoate-dependent enzymes. The protein is Lipoate-protein ligase A of Shigella dysenteriae serotype 1 (strain Sd197).